Here is a 460-residue protein sequence, read N- to C-terminus: Capsid vertex component 1 (460 aa).

The tract at residues 167–197 (VQNSTGQDHRSPVNDNNEHTVTPGPLEPPSV) is disordered. Residues 173–184 (QDHRSPVNDNNE) show a composition bias toward basic and acidic residues.

The protein belongs to the herpesviridae CVC1 protein family. Interacts (via C-terminus) with capsid vertex component 2/CVC2.

It localises to the virion. The protein localises to the host nucleus. Capsid vertex-specific component that plays a role during viral DNA encapsidation, assuring correct genome cleavage and presumably stabilizing capsids that contain full-length viral genomes. This chain is Capsid vertex component 1, found in Elephantid herpesvirus 1 (isolate Asian elephant/Berlin/Kiba/1998) (EIHV-1).